A 639-amino-acid polypeptide reads, in one-letter code: Chaperone protein DnaK 1 (639 aa).

Residue Thr-199 is modified to Phosphothreonine; by autocatalysis. Positions 603–612 (QQQAQAQQAP) are enriched in low complexity. Residues 603–639 (QQQAQAQQAPGGEGEQEAKQDDNVVDAEFEEVKDEKK) form a disordered region. Acidic residues predominate over residues 625-639 (NVVDAEFEEVKDEKK).

This sequence belongs to the heat shock protein 70 family.

Its function is as follows. Acts as a chaperone. In Photobacterium profundum (strain SS9), this protein is Chaperone protein DnaK 1.